An 881-amino-acid polypeptide reads, in one-letter code: DNA replication helicase (881 aa).

The segment at 1–32 is disordered; sequence MESADILPGSRGTVDRRCEGSEEKITPPRPVE. Positions 13–32 are enriched in basic and acidic residues; it reads TVDRRCEGSEEKITPPRPVE. 105–112 serves as a coordination point for ATP; it reads GNAGSGKS.

This sequence belongs to the herpesviridae helicase family. As to quaternary structure, associates with the primase and the primase-associated factor to form the helicase-primase complex.

The protein resides in the host nucleus. Its function is as follows. Component of the helicase/primase complex. Unwinds the DNA at the replication forks and generates single-stranded DNA for both leading and lagging strand synthesis. The primase synthesizes short RNA primers on the lagging strand that the polymerase elongates using dNTPs. Possesses helicase-like motifs and therefore may act as the helicase subunit of the complex. The sequence is that of DNA replication helicase from Equus caballus (Horse).